Consider the following 188-residue polypeptide: RWD domain-containing protein 4 (188 aa).

In terms of domain architecture, RWD spans 9–111 (MELEALRSIY…EYAKDHKEQF (103 aa)). A disordered region spans residues 132–167 (TPTTAPSSKKKEKKEQLSKAQKRKLADKTDHKGELP). A compositionally biased stretch (basic and acidic residues) spans 155 to 166 (KLADKTDHKGEL).

In Mus musculus (Mouse), this protein is RWD domain-containing protein 4 (Rwdd4).